We begin with the raw amino-acid sequence, 789 residues long: GDH/6PGL endoplasmic bifunctional protein (789 aa).

Positions 1 to 16 (MLLAAMCLALLGCLQA) are cleaved as a signal peptide. Pyrrolidone carboxylic acid is present on Gln17. The tract at residues 17 to 524 (QELKGHVSII…GGQLTFSQQQ (508 aa)) is hexose-6-phosphate dehydrogenase. Residues 29–36 (GATGDLAK) and Tyr146 each bind NADP(+). Asn154 carries N-linked (GlcNAc...) asparagine glycosylation. Residue Lys171 participates in NADP(+) binding. D-glucose 6-phosphate is bound by residues Lys171, 201–205 (HYLGK), Glu240, and Asp259. The residue at position 205 (Lys205) is an N6-succinyllysine. Residue His264 is the Proton acceptor of the active site. Asn279 carries an N-linked (GlcNAc...) asparagine glycan. D-glucose 6-phosphate is bound by residues Lys357 and Arg362. Residue Arg367 participates in NADP(+) binding. Lys424 carries the post-translational modification N6-succinyllysine. The linker stretch occupies residues 525–538 (LEVLIPDLGSVPKP). Residues 539–789 (SDFQVLGARY…WYMDYEAFLG (251 aa)) are 6-phosphogluconolactonase. An NADP(+)-binding site is contributed by Trp615. Residue Asn681 is glycosylated (N-linked (GlcNAc...) asparagine).

In the N-terminal section; belongs to the glucose-6-phosphate dehydrogenase family. This sequence in the C-terminal section; belongs to the glucosamine/galactosamine-6-phosphate isomerase family. 6-phosphogluconolactonase subfamily. As to quaternary structure, homodimer. Expressed in liver (at protein level). Expressed in muscles. Expressed in adipose tissues.

The protein resides in the endoplasmic reticulum lumen. The enzyme catalyses D-glucose 6-phosphate + NAD(+) = 6-phospho-D-glucono-1,5-lactone + NADH + H(+). It catalyses the reaction D-glucose 6-phosphate + NADP(+) = 6-phospho-D-glucono-1,5-lactone + NADPH + H(+). It carries out the reaction 6-phospho-D-glucono-1,5-lactone + H2O = 6-phospho-D-gluconate + H(+). The catalysed reaction is 2-deoxy-D-glucose 6-phosphate + NAD(+) = 2-deoxy-6-phospho-D-glucono-1,5-lactone + NADH + H(+). The enzyme catalyses 2-deoxy-D-glucose 6-phosphate + NADP(+) = 2-deoxy-6-phospho-D-glucono-1,5-lactone + NADPH + H(+). It catalyses the reaction D-galactose 6-phosphate + NADP(+) = 6-phospho-D-galactono-1,5-lactone + NADPH + H(+). It carries out the reaction D-galactose 6-phosphate + NAD(+) = 6-phospho-D-galactono-1,5-lactone + NADH + H(+). The catalysed reaction is D-glucosamine 6-phosphate + NADP(+) = 2-amino-2-deoxy-6-phospho-D-glucono-1,5-lactone + NADPH + 2 H(+). The enzyme catalyses D-glucose + NAD(+) = D-glucono-1,5-lactone + NADH + H(+). It catalyses the reaction D-glucose + NADP(+) = D-glucono-1,5-lactone + NADPH + H(+). It carries out the reaction D-glucose 6-sulfate + NADP(+) = 6-sulfo-D-glucono-1,5-lactone + NADPH + H(+). It participates in carbohydrate degradation; pentose phosphate pathway; D-ribulose 5-phosphate from D-glucose 6-phosphate (oxidative stage). It functions in the pathway carbohydrate degradation; pentose phosphate pathway; D-ribulose 5-phosphate from D-glucose 6-phosphate (oxidative stage): step 2/3. In terms of biological role, bifunctional enzyme localized in the lumen of the endoplasmic reticulum that catalyzes the first two steps of the oxidative branch of the pentose phosphate pathway/shunt, an alternative to glycolysis and a major source of reducing power and metabolic intermediates for biosynthetic processes. Has a hexose-6-phosphate dehydrogenase activity, with broad substrate specificity compared to glucose-6-phosphate 1-dehydrogenase/G6PD, and catalyzes the first step of the pentose phosphate pathway. In addition, acts as a 6-phosphogluconolactonase and catalyzes the second step of the pentose phosphate pathway. May have a dehydrogenase activity for alternative substrates including glucosamine 6-phosphate and glucose 6-sulfate. The main function of this enzyme is to provide reducing equivalents such as NADPH to maintain the adequate levels of reductive cofactors in the oxidizing environment of the endoplasmic reticulum. By producing NADPH that is needed by reductases of the lumen of the endoplasmic reticulum like corticosteroid 11-beta-dehydrogenase isozyme 1/HSD11B1, indirectly regulates their activity. The chain is GDH/6PGL endoplasmic bifunctional protein from Mus musculus (Mouse).